Here is a 589-residue protein sequence, read N- to C-terminus: MTCWLHMLGLHLLLLPTAPLAAGCPARCECSASTRTVACGRRRLTAIPEGIPAETRMLELSRNRIRCLNPGDLASLPTLEELDLNHNVIAHVEPGAFANLPRLRVLRLRGNQLKLIPPGVFTHLDSLTLLDLSENKLVILLDFSFQDLRSLQRLEVGDNDLVFISRRAFAGLLGLAELTLERCNLTSLSPESLGHLRGLGALRLRHLAIAALEDQNFQKLPGLSHLEIDNWPLLEEVAPGSLRGLNLTSLSITHTNITAVPAAALRQQAHLTCLNLSHNPISMVPRGSFRDLVRLRELHLAGALLAVIEPQAFVGLRQIRLLNLSDNLLSTLEENTFHSVNTLETLRVDGNPLACDCRLLWIVQRRKTLNFDGRLPACATPAEVRGDALHNLPDSVLFEYFVCRKPKIRERRLQHVTATEGDDVRFLCRAEGEPAPTVAWVTPQHHSVTAASRGRARVLPGGTLTIADTRPQDSGTYTCVASNAGGNDTYFATLTVQPAANRTQGDGHNETQVGVRFPLDLTTILVSTAMGCITFLGVVLFCFLLLFVWSRGRGQHKNNFSVEYSFRKVDGPAAAAGQGGARKFNMKMI.

The signal sequence occupies residues M1–G23. Residues C24–A53 enclose the LRRNT domain. Topologically, residues C24–T528 are extracellular. LRR repeat units lie at residues E54 to S75, T78 to N99, R102 to H123, S126 to D147, S150 to G171, G174 to H195, H206 to E227, N246 to Q267, H270 to D291, R294 to G315, and Q318 to S339. N-linked (GlcNAc...) asparagine glycosylation occurs at N184. N-linked (GlcNAc...) asparagine glycosylation is found at N246, N256, and N275. Residue N323 is glycosylated (N-linked (GlcNAc...) asparagine). An LRRCT domain is found at N351 to K405. Residues P406–T495 enclose the Ig-like C2-type domain. C428 and C479 are joined by a disulfide. N-linked (GlcNAc...) asparagine glycosylation is found at N487, N501, and N509. Residues A529–W549 form a helical membrane-spanning segment. The Cytoplasmic portion of the chain corresponds to S550–I589.

The protein resides in the membrane. In Mus musculus (Mouse), this protein is Leucine-rich repeat and immunoglobulin-like domain-containing nogo receptor-interacting protein 3 (Lingo3).